We begin with the raw amino-acid sequence, 352 residues long: Ion-translocating oxidoreductase complex subunit D (352 aa).

A run of 4 helical transmembrane segments spans residues isoleucine 20–glycine 40, glycine 42–leucine 62, valine 69–proline 91, and proline 123–leucine 143. Threonine 187 carries the post-translational modification FMN phosphoryl threonine. Transmembrane regions (helical) follow at residues leucine 215–leucine 235, tryptophan 242–phenylalanine 262, leucine 267–leucine 287, leucine 301–proline 321, and aspartate 322–threonine 342.

It belongs to the NqrB/RnfD family. The complex is composed of six subunits: RsxA, RsxB, RsxC, RsxD, RsxE and RsxG. FMN is required as a cofactor.

The protein localises to the cell inner membrane. Its function is as follows. Part of a membrane-bound complex that couples electron transfer with translocation of ions across the membrane. Required to maintain the reduced state of SoxR. The polypeptide is Ion-translocating oxidoreductase complex subunit D (Salmonella paratyphi A (strain ATCC 9150 / SARB42)).